A 492-amino-acid chain; its full sequence is Fibroblast growth factor receptor substrate 3 (492 aa).

Gly2 carries N-myristoyl glycine lipidation. An IRS-type PTB domain is found at 13–115; that stretch reads VPHNHPTKFK…QCNSINVTEE (103 aa). 3 disordered regions span residues 125-205, 337-413, and 425-492; these read PQEL…EDRR, QQLR…EPPR, and WGTA…DLPL. 2 stretches are compositionally biased toward polar residues: residues 133 to 147 and 166 to 185; these read GSSQ…SFSN and PSTS…QTLI. Positions 374–385 are enriched in low complexity; sequence TSTRASARSHSS.

As to quaternary structure, binds NTRK1, FGFR1, NGFR, GRB2, PTPN11 and ERK2. Phosphorylated on tyrosine residues upon stimulation by BFGF or NGFB.

The protein localises to the membrane. Functionally, adapter protein that links FGF and NGF receptors to downstream signaling pathways. Involved in the activation of MAP kinases. Down-regulates ERK2 signaling by interfering with the phosphorylation and nuclear translocation of ERK2. The sequence is that of Fibroblast growth factor receptor substrate 3 (Frs3) from Rattus norvegicus (Rat).